Here is a 926-residue protein sequence, read N- to C-terminus: Storkhead-box protein 2 (926 aa).

7 disordered regions span residues 1-32 (MKKT…RSEK), 338-391 (EEEK…HLDI), 452-529 (EMPF…SYID), 564-588 (KEPS…YGEL), 632-672 (GVKK…GGVA), 724-803 (LKSH…GTMQ), and 825-926 (LAPK…VTSV). The span at 18-32 (FSDRASDRMRSRSEK) shows a compositional bias: basic and acidic residues. Over residues 353–378 (HSGRSKKSRTHRKSHGKSRSHSKTRV) the composition is skewed to basic residues. Positions 379-391 (SKGDPSDGSHLDI) are enriched in basic and acidic residues. Residues 463–472 (SHSKVHRSHS) show a composition bias toward basic residues. The segment covering 473-495 (HTQDRRSRNERSNKAKERSRSMD) has biased composition (basic and acidic residues). The segment covering 518 to 529 (QDDQTPSQSYID) has biased composition (polar residues). Basic and acidic residues predominate over residues 632-658 (GVKKLSPSDRQVPHSSREPVGHKEESP). The segment covering 746–769 (LGTSAAQAMPASQRQQESGGNQEA) has biased composition (polar residues). Basic and acidic residues predominate over residues 785 to 799 (GANKNTEEEKNREDV). Polar residues-rich tracts occupy residues 847 to 884 (MDSS…QNPA) and 914 to 926 (KPSN…VTSV).

This Homo sapiens (Human) protein is Storkhead-box protein 2 (STOX2).